A 614-amino-acid polypeptide reads, in one-letter code: Leucine-rich repeat and immunoglobulin-like domain-containing nogo receptor-interacting protein 1 (614 aa).

The first 35 residues, 1–35 (MLAGGVRSMPSPLLACWQPILLLVLGSVLSGSATG), serve as a signal peptide directing secretion. 2 disulfide bridges follow: Cys36-Cys42 and Cys40-Cys51. Residues 36 to 65 (CPPRCECSAQDRAVLCHRKRFVAVPEGIPT) form the LRRNT domain. The Extracellular portion of the chain corresponds to 36 to 555 (CPPRCECSAQ…FDIKTLIIAT (520 aa)). LRR repeat units lie at residues 66–87 (ETRL…EFAS), 90–111 (HLEE…AFNN), 114–135 (NLRT…VFTG), 138–159 (NLTK…MFQD), 162–183 (NLKS…AFSG), 186–207 (SLEQ…ALSH), 210–231 (GLIV…SFKR), 258–279 (NLTS…AVRH), 282–303 (YLRF…MLHE), 306–327 (RLQE…AFRG), and 330–351 (YLRV…VFHS). Asn138 carries an N-linked (GlcNAc...) asparagine glycan. The N-linked (GlcNAc...) asparagine glycan is linked to Asn196. N-linked (GlcNAc...) asparagine glycosylation is found at Asn258, Asn268, and Asn287. Asn335 is a glycosylation site (N-linked (GlcNAc...) asparagine). An LRRCT domain is found at 363 to 417 (NPLACDCRLLWVFRRRWRLNFNRQQPTCATPEFVQGKEFKDFPDVLLPNYFTCRR). 3 disulfide bridges follow: Cys367–Cys390, Cys369–Cys415, and Cys440–Cys491. Residues 405-507 (PDVLLPNYFT…GNDSMPAHLH (103 aa)) enclose the Ig-like C2-type domain. Asn486 and Asn536 each carry an N-linked (GlcNAc...) asparagine glycan. The helical transmembrane segment at 556 to 576 (TMGFISFLGVVLFCLVLLFLW) threads the bilayer. Residues 577–614 (SRGKGNTKHNIEIEYVPRKSDAGISSADAPRKFNMKMI) are Cytoplasmic-facing. Ser596 bears the Phosphoserine mark.

Homotetramer. Forms a ternary complex with RTN4R/NGFR and RTN4R/TNFRSF19. Interacts with NGRF, RTN4R and MYT1L. In terms of processing, N-glycosylated. Contains predominantly high-mannose glycans.

The protein resides in the cell membrane. Functionally, functional component of the Nogo receptor signaling complex (RTN4R/NGFR) in RhoA activation responsible for some inhibition of axonal regeneration by myelin-associated factors. Is also an important negative regulator of oligodentrocyte differentiation and axonal myelination. Acts in conjunction with RTN4 and RTN4R in regulating neuronal precursor cell motility during cortical development. The chain is Leucine-rich repeat and immunoglobulin-like domain-containing nogo receptor-interacting protein 1 (LINGO1) from Macaca fascicularis (Crab-eating macaque).